The sequence spans 447 residues: Chromosomal replication initiator protein DnaA (447 aa).

Positions 1–74 are domain I, interacts with DnaA modulators; that stretch reads MENIEELWSA…MLLEVTGSEL (74 aa). The domain II stretch occupies residues 74–108; the sequence is LNTKFIIPDSLEEIEEQKPMPKPKQSTDTGDSPKS. The interval 85–107 is disordered; it reads EEIEEQKPMPKPKQSTDTGDSPK. A compositionally biased stretch (polar residues) spans 97 to 107; the sequence is KQSTDTGDSPK. Residues 109-325 are domain III, AAA+ region; it reads MLNSKYTFDT…GALIRVVAYS (217 aa). ATP-binding residues include Gly-153, Gly-155, Lys-156, and Thr-157. The domain IV, binds dsDNA stretch occupies residues 326–447; it reads SLVNQDIDAS…EELKEKLKSI (122 aa).

Belongs to the DnaA family. As to quaternary structure, oligomerizes as a right-handed, spiral filament on DNA at oriC.

It localises to the cytoplasm. Functionally, plays an essential role in the initiation and regulation of chromosomal replication. ATP-DnaA binds to the origin of replication (oriC) to initiate formation of the DNA replication initiation complex once per cell cycle. Binds the DnaA box (a 9 base pair repeat at the origin) and separates the double-stranded (ds)DNA. Forms a right-handed helical filament on oriC DNA; dsDNA binds to the exterior of the filament while single-stranded (ss)DNA is stabiized in the filament's interior. The ATP-DnaA-oriC complex binds and stabilizes one strand of the AT-rich DNA unwinding element (DUE), permitting loading of DNA polymerase. After initiation quickly degrades to an ADP-DnaA complex that is not apt for DNA replication. Binds acidic phospholipids. The polypeptide is Chromosomal replication initiator protein DnaA (Oceanobacillus iheyensis (strain DSM 14371 / CIP 107618 / JCM 11309 / KCTC 3954 / HTE831)).